A 254-amino-acid polypeptide reads, in one-letter code: Bidirectional sugar transporter SWEET6b (254 aa).

Over 1–9 (MISPDAARN) the chain is Extracellular. Residues 10–30 (VVGIIGNVISFGLFLAPVPTF) form a helical membrane-spanning segment. Positions 10–98 (VVGIIGNVIS…IFFLYSPNKK (89 aa)) constitute a MtN3/slv 1 domain. The Cytoplasmic portion of the chain corresponds to 31 to 45 (WRICKRKDVEEFKAD). Residues 46-66 (PYLATLLNCMLWVFYGIPIVH) traverse the membrane as a helical segment. At 67–69 (PNS) the chain is on the extracellular side. A helical membrane pass occupies residues 70–90 (ILVVTINGIGLVVEGTYLFIF). At 91-101 (FLYSPNKKRLR) the chain is on the cytoplasmic side. A helical transmembrane segment spans residues 102–122 (MLAVLGVELVFMLAVILGVLL). Residues 123 to 131 (GAHTHKKRS) lie on the Extracellular side of the membrane. Residues 132-152 (MIVGILCVFFGSIMYFSPLTI) traverse the membrane as a helical segment. In terms of domain architecture, MtN3/slv 2 spans 133–216 (IVGILCVFFG…LILYACYYRT (84 aa)). The Cytoplasmic portion of the chain corresponds to 153–165 (MGKVIKTKSVEYM). The chain crosses the membrane as a helical span at residues 166 to 186 (PFFLSLVCFLNGVCWTAYALI). At 187–189 (RFD) the chain is on the extracellular side. Residues 190 to 210 (IYVTIPNSLGAIFGAIQLILY) form a helical membrane-spanning segment. The Cytoplasmic segment spans residues 211 to 254 (ACYYRTTPKKTKAAKDVEMPSVISGPGAAATASGGSVVSVTVER).

It belongs to the SWEET sugar transporter family. As to quaternary structure, forms homooligomers and/or heterooligomers.

The protein localises to the cell membrane. In terms of biological role, mediates both low-affinity uptake and efflux of sugar across the plasma membrane. This chain is Bidirectional sugar transporter SWEET6b (SWEET6B), found in Oryza sativa subsp. indica (Rice).